The primary structure comprises 278 residues: Probable cytochrome c oxidase subunit 3 (278 aa).

6 helical membrane passes run 21-41 (PWPV…VSFM), 46-66 (FNIY…YSWW), 89-109 (IGMA…FASF), 174-194 (CVTA…MQAY), 212-232 (FYLA…FLIV), and 256-276 (AWYW…VYIF).

Belongs to the cytochrome c oxidase subunit 3 family.

The protein resides in the cell membrane. The enzyme catalyses 4 Fe(II)-[cytochrome c] + O2 + 8 H(+)(in) = 4 Fe(III)-[cytochrome c] + 2 H2O + 4 H(+)(out). This chain is Probable cytochrome c oxidase subunit 3 (ctaE), found in Rickettsia felis (strain ATCC VR-1525 / URRWXCal2) (Rickettsia azadi).